A 315-amino-acid chain; its full sequence is Putative purine nucleoside phosphorylase (315 aa).

Residues S49, H81, 103–105, and A135 contribute to the phosphate site; that span reads RYH. An a purine D-ribonucleoside-binding site is contributed by E220. Residue S239 coordinates phosphate. N262 is a binding site for a purine D-ribonucleoside.

Belongs to the PNP/MTAP phosphorylase family.

Its subcellular location is the cytoplasm. The protein localises to the nucleus. The catalysed reaction is a purine D-ribonucleoside + phosphate = a purine nucleobase + alpha-D-ribose 1-phosphate. The protein operates within purine metabolism; purine nucleoside salvage. The purine nucleoside phosphorylases catalyze the phosphorolytic breakdown of the N-glycosidic bond in the beta-(deoxy)ribonucleoside molecules, with the formation of the corresponding free purine bases and pentose-1-phosphate. Cleaves guanosine and inosine. This is Putative purine nucleoside phosphorylase from Schizosaccharomyces pombe (strain 972 / ATCC 24843) (Fission yeast).